The sequence spans 439 residues: D-erythronate kinase (439 aa).

ATP-binding positions include Ser253, 366 to 369, and Gly412; that span reads GGDV.

It belongs to the four-carbon acid sugar kinase family.

The enzyme catalyses D-erythronate + ATP = 4-phospho-D-erythronate + ADP + H(+). Its function is as follows. Catalyzes the ATP-dependent phosphorylation of D-erythronate to D-erythronate 4-phosphate. Can also phosphorylate D-threonate and 4-hydroxy-L-threonine, with lower efficiency. This is D-erythronate kinase from Heliobacterium modesticaldum (strain ATCC 51547 / Ice1).